We begin with the raw amino-acid sequence, 248 residues long: Triosephosphate isomerase (248 aa).

2 residues coordinate D-glyceraldehyde 3-phosphate: Asn-10 and Lys-12. His-95 serves as the catalytic Electrophile. The active-site Proton acceptor is the Glu-165. D-glyceraldehyde 3-phosphate is bound by residues Gly-171, Leu-230, and 232-233 (GN).

It belongs to the triosephosphate isomerase family. As to quaternary structure, homodimer.

The catalysed reaction is D-glyceraldehyde 3-phosphate = dihydroxyacetone phosphate. It participates in carbohydrate biosynthesis; gluconeogenesis. The protein operates within carbohydrate degradation; glycolysis; D-glyceraldehyde 3-phosphate from glycerone phosphate: step 1/1. In terms of biological role, catalyzes the interconversion of glyceraldehyde 3-phosphate and dihydroxyacetone phosphate in the glycolytic and gluconeogenic pathways. The sequence is that of Triosephosphate isomerase from Plasmodium falciparum (isolate 3D7).